The chain runs to 235 residues: Adenosine 5'-phosphosulfate reductase (235 aa).

[4Fe-4S] cluster contacts are provided by C121, C122, C204, and C207. The Nucleophile; cysteine thiosulfonate intermediate role is filled by C230.

It belongs to the PAPS reductase family. CysH subfamily. The cofactor is [4Fe-4S] cluster.

It is found in the cytoplasm. The catalysed reaction is [thioredoxin]-disulfide + sulfite + AMP + 2 H(+) = adenosine 5'-phosphosulfate + [thioredoxin]-dithiol. The protein operates within sulfur metabolism; hydrogen sulfide biosynthesis; sulfite from sulfate. Catalyzes the formation of sulfite from adenosine 5'-phosphosulfate (APS) using thioredoxin as an electron donor. This is Adenosine 5'-phosphosulfate reductase from Geobacillus kaustophilus (strain HTA426).